The chain runs to 483 residues: MSFQRLWAVRTQFLLLWLLLPAVPVPWAEARRSRVSLPCPDACDPTRCPTLPTCSAGLAPVPDRCGCCRVCAAAEGQECGGARGRPCAPRLRCGAPFSRDPSGGAWLGTCGCAEGAEDAVVCGSDGRTYPSLCALRKENRAARQRGALPAVPVQKGACEEAGTTRAGRLRRKYNFIAAVVEKVAPSVVHLQLFRRSPLTNQEIPSSSGSGFIVSEDGLIVTNAHVLTNQQKIQVELQSGARYEATVKDIDHKLDLALIKIEPDTELPVLLLGRSSDLRAGEFVVALGSPFSLQNTVTAGIVSTTQRGGRELGLKNSDIDYIQTDAIINHGNSGGPLVNLDGDVIGINTLKVTAGISFAIPSDRIRQFLEDYHERQLKGKAPLQKKYLGLRMLPLTLNLLQEMKRQDPEFPDVSSGVFVYEVIQGSAAASSGLRDHDVIVSINGQPVTTTTDVIEAVKDNDFLSIIVLRGSQTLFLTVTPEIIN.

An N-terminal signal peptide occupies residues 1 to 30 (MSFQRLWAVRTQFLLLWLLLPAVPVPWAEA). The IGFBP N-terminal domain maps to 35–113 (VSLPCPDACD…GAWLGTCGCA (79 aa)). Disulfide bonds link Cys-39–Cys-65, Cys-43–Cys-67, Cys-48–Cys-68, Cys-54–Cys-71, Cys-79–Cys-93, and Cys-87–Cys-110. Residues 208-368 (GSGFIVSEDG…IPSDRIRQFL (161 aa)) form a serine protease region. Active-site charge relay system residues include His-224, Asp-254, and Ser-332. Residues 379–471 (KAPLQKKYLG…LSIIVLRGSQ (93 aa)) enclose the PDZ domain.

The protein belongs to the peptidase S1C family.

Its subcellular location is the secreted. Serine protease. The polypeptide is Serine protease HTRA4 (Htra4) (Mus musculus (Mouse)).